We begin with the raw amino-acid sequence, 209 residues long: Small ribosomal subunit protein uS4 (209 aa).

One can recognise an S4 RNA-binding domain in the interval 98–164 (SRLDNVVYRG…TPFIVARETA (67 aa)).

It belongs to the universal ribosomal protein uS4 family. Part of the 30S ribosomal subunit. Contacts protein S5. The interaction surface between S4 and S5 is involved in control of translational fidelity.

In terms of biological role, one of the primary rRNA binding proteins, it binds directly to 16S rRNA where it nucleates assembly of the body of the 30S subunit. Functionally, with S5 and S12 plays an important role in translational accuracy. The sequence is that of Small ribosomal subunit protein uS4 from Frankia alni (strain DSM 45986 / CECT 9034 / ACN14a).